Reading from the N-terminus, the 423-residue chain is Probable sucrose-phosphatase 1 (423 aa).

Belongs to the sucrose phosphatase family. As to quaternary structure, homodimer. The cofactor is Mg(2+).

The catalysed reaction is sucrose 6(F)-phosphate + H2O = sucrose + phosphate. It functions in the pathway glycan biosynthesis; sucrose biosynthesis; sucrose from D-fructose 6-phosphate and UDP-alpha-D-glucose: step 2/2. Functionally, catalyzes the final step of sucrose synthesis. This chain is Probable sucrose-phosphatase 1 (SPP1), found in Arabidopsis thaliana (Mouse-ear cress).